The chain runs to 243 residues: MKQIVLDENCLAGNFIIVKDAKIYHHLVNVRRLKKGDKLNILLKDKELRASEIVKIGSNFIKFTTNKIDKIEKNNFEISIFISSLKGRKIDLVLRQVVEIGVSEINIINADRSVSKIDINNASAKILRFSKIIDEALKQSGNKIVPKINFYNNFFYLPYSFCTTRYYVAHPSGMILSKNESFDNFGKIGIIIGPEGCFSESEIVFFKEKGFNFVRFNTPILRADTAIIYSLAYFKALLEDYNG.

The protein belongs to the RNA methyltransferase RsmE family.

Its subcellular location is the cytoplasm. The enzyme catalyses uridine(1498) in 16S rRNA + S-adenosyl-L-methionine = N(3)-methyluridine(1498) in 16S rRNA + S-adenosyl-L-homocysteine + H(+). Functionally, specifically methylates the N3 position of the uracil ring of uridine 1498 (m3U1498) in 16S rRNA. Acts on the fully assembled 30S ribosomal subunit. This is Ribosomal RNA small subunit methyltransferase E 2 (rsmE2) from Borreliella burgdorferi (strain ATCC 35210 / DSM 4680 / CIP 102532 / B31) (Borrelia burgdorferi).